Reading from the N-terminus, the 714-residue chain is Macrophage-expressed gene 1 protein (714 aa).

The N-terminal stretch at 1 to 19 is a signal peptide; that stretch reads MNSFMAIALIWMMIACAEA. Residues 30–345 form the MACPF domain; the sequence is GFQTCKDTLK…TAVRHYYTFN (316 aa). Cysteines 34 and 70 form a disulfide. 2 consecutive transmembrane segments (beta stranded) span residues 113–120 and 127–132; these read FSINTELS and GKFSTE. N-linked (GlcNAc...) asparagine glycosylation is present at Asn185. The next 2 beta stranded transmembrane spans lie at 235 to 244 and 248 to 256; these read TVTASAGIAF and VNFKVETDH. N-linked (GlcNAc...) asparagine glycosylation occurs at Asn269. Residues Cys350 and Cys369 are joined by a disulfide bond. Residue Asn375 is glycosylated (N-linked (GlcNAc...) asparagine). 5 disulfide bridges follow: Cys385-Cys394, Cys432-Cys446, Cys436-Cys442, Cys531-Cys569, and Cys554-Cys574. The tract at residues 410–653 is P2; it reads PSGYTPVHLL…GDGNGMSGGE (244 aa). Residues 654-674 form a helical membrane-spanning segment; the sequence is AAGVTLGVIIALGIVITLAIY. The interval 690–714 is disordered; that stretch reads EQESLVGSFATDASPPNGEQDPCPA.

Belongs to the MPEG1 family. In terms of assembly, homooligomer; predominantly forms a homooligomeric arc-shaped pore complex instead of complete rings of 16 subunits. In terms of processing, proteolytically processed in two steps to generate the Macrophage-expressed gene 1 protein, processed form: cleaved by trypsin in proximity of the helical transmembrane domain releases the ectodomain into the lysosomal lumen to orient the pore-forming domain toward the endogenous membranes, and processed by the asparagine endopeptidase (LGMN). Proteolytic processing in antigen-containing vesicles is pH-dependent. Monoubiquitinated in response to bacterial infection; ubiquitination is required for vesicular localization and antibacterial activity and can be blocked by bacterial cell cycle inhibiting factor (cif).

It localises to the cytoplasmic vesicle membrane. The protein localises to the cytoplasmic vesicle. It is found in the phagosome membrane. With respect to regulation, forms arc- and ring-shaped pre-pores on top of the membrane at neutral to slightly acidic pH conditions and converts to pores upon acidification. Undergoes transition from the pre-pore to the pore in a processive clockwise hand-over-hand process. In the pore state, 2 alpha-helical regions refold into transmembrane hairpins (TMH1 and TMH2) in each protomer that form in the ensemble complex giant beta-barrel transmembrane pores. Pore-forming protein involved in both innate and adaptive immunity. Plays a central role in antigen cross-presentation in dendritic cells by forming a pore in antigen-containing compartments, thereby promoting delivery of antigens for cross-presentation. Also involved in innate immune response following bacterial infection; shows antibacterial activity against a wide spectrum of Gram-positive, Gram-negative and acid-fast bacteria. Reduces the viability of the intracytosolic pathogen L.monocytogenes by inhibiting acidification of the phagocytic vacuole of host cells which restricts bacterial translocation from the vacuole to the cytosol. Required for the antibacterial activity of reactive oxygen species and nitric oxide. In terms of biological role, pore-forming protein that plays a central role in antigen cross-presentation in dendritic cells by mediating delivery of antigens for cross-presentation. Dendritic cells bridge innate and adaptive immunity by capturing exogenous antigens on MHC class-I molecules and presenting them to naive CD8(+) T-cells. Acts by forming a pore in antigen-containing compartments, promoting the release of antigens into the cytosol, enabling generation of MHCI:peptide complexes and T-cell priming. In Rattus norvegicus (Rat), this protein is Macrophage-expressed gene 1 protein (Mpeg1).